Here is a 428-residue protein sequence, read N- to C-terminus: Light-independent protochlorophyllide reductase subunit N (428 aa).

Residues Cys-31, Cys-56, and Cys-117 each coordinate [4Fe-4S] cluster.

This sequence belongs to the BchN/ChlN family. Protochlorophyllide reductase is composed of three subunits; BchL, BchN and BchB. Forms a heterotetramer of two BchB and two BchN subunits. [4Fe-4S] cluster is required as a cofactor.

It carries out the reaction chlorophyllide a + oxidized 2[4Fe-4S]-[ferredoxin] + 2 ADP + 2 phosphate = protochlorophyllide a + reduced 2[4Fe-4S]-[ferredoxin] + 2 ATP + 2 H2O. The protein operates within porphyrin-containing compound metabolism; bacteriochlorophyll biosynthesis (light-independent). Functionally, component of the dark-operative protochlorophyllide reductase (DPOR) that uses Mg-ATP and reduced ferredoxin to reduce ring D of protochlorophyllide (Pchlide) to form chlorophyllide a (Chlide). This reaction is light-independent. The NB-protein (BchN-BchB) is the catalytic component of the complex. The chain is Light-independent protochlorophyllide reductase subunit N from Rhodopseudomonas palustris (strain HaA2).